The following is a 340-amino-acid chain: Glycerol-3-phosphate dehydrogenase [NAD(P)+] (340 aa).

NADPH is bound by residues S14, F15, R35, and K109. K109 and G137 together coordinate sn-glycerol 3-phosphate. Residue A141 coordinates NADPH. 5 residues coordinate sn-glycerol 3-phosphate: K192, D245, S255, R256, and N257. The active-site Proton acceptor is the K192. R256 contacts NADPH. NADPH is bound by residues V280 and E282.

The protein belongs to the NAD-dependent glycerol-3-phosphate dehydrogenase family.

The protein resides in the cytoplasm. It catalyses the reaction sn-glycerol 3-phosphate + NAD(+) = dihydroxyacetone phosphate + NADH + H(+). The enzyme catalyses sn-glycerol 3-phosphate + NADP(+) = dihydroxyacetone phosphate + NADPH + H(+). Its pathway is membrane lipid metabolism; glycerophospholipid metabolism. Its function is as follows. Catalyzes the reduction of the glycolytic intermediate dihydroxyacetone phosphate (DHAP) to sn-glycerol 3-phosphate (G3P), the key precursor for phospholipid synthesis. The polypeptide is Glycerol-3-phosphate dehydrogenase [NAD(P)+] (Teredinibacter turnerae (strain ATCC 39867 / T7901)).